Reading from the N-terminus, the 100-residue chain is Apolipoprotein C-II (100 aa).

Residues 1-25 (MDARSLLLLWLLLPLLLLLGCEVQG) form the signal peptide. The tract at residues 65 to 73 (AVDETIRDI) is lipid binding. A lipoprotein lipase cofactor region spans residues 77-100 (GSAAISTYTGILTDQILTMLQGKQ).

The protein belongs to the apolipoprotein C2 family. Proapolipoprotein C-II is synthesized as a sialic acid containing glycoprotein which is subsequently desialylated prior to its proteolytic processing. In terms of processing, proapolipoprotein C-II, the major form found in plasma undergoes proteolytic cleavage of its N-terminal hexapeptide to generate apolipoprotein C-II, which occurs as the minor form in plasma. Liver.

Its subcellular location is the secreted. Functionally, component of chylomicrons, very low-density lipoproteins (VLDL), low-density lipoproteins (LDL), and high-density lipoproteins (HDL) in plasma. Plays an important role in lipoprotein metabolism as an activator of lipoprotein lipase. Both proapolipoprotein C-II and apolipoprotein C-II can activate lipoprotein lipase. The chain is Apolipoprotein C-II (APOC2) from Cavia porcellus (Guinea pig).